A 376-amino-acid polypeptide reads, in one-letter code: RNA binding protein fox-1 homolog 1 (376 aa).

A disordered region spans residues 1-126; that stretch reads MEEKGSRMVQ…QPKRLHVSNI (126 aa). The segment covering 72-89 has biased composition (polar residues); sequence QTHSEQSPADTNAQTVSG. Low complexity predominate over residues 90–101; that stretch reads TATQTDDAAPTD. Positions 102–115 are enriched in polar residues; it reads GQPQTQPSENTENK. In terms of domain architecture, RRM spans 119–195; the sequence is KRLHVSNIPF…RKIEVNNATA (77 aa). The residue at position 319 (R319) is an Asymmetric dimethylarginine.

Binds to the C-terminus of ATXN2.

The protein localises to the nucleus. Its subcellular location is the cytoplasm. Its function is as follows. RNA-binding protein that regulates alternative splicing events by binding to 5'-UGCAUGU-3' elements. Prevents binding of U2AF2 to the 3'-splice site. Regulates alternative splicing of tissue-specific exons and of differentially spliced exons during erythropoiesis. In Macaca fascicularis (Crab-eating macaque), this protein is RNA binding protein fox-1 homolog 1 (RBFOX1).